Here is a 300-residue protein sequence, read N- to C-terminus: Phosphoribosylaminoimidazole-succinocarboxamide synthase (300 aa).

The protein belongs to the SAICAR synthetase family.

The catalysed reaction is 5-amino-1-(5-phospho-D-ribosyl)imidazole-4-carboxylate + L-aspartate + ATP = (2S)-2-[5-amino-1-(5-phospho-beta-D-ribosyl)imidazole-4-carboxamido]succinate + ADP + phosphate + 2 H(+). The protein operates within purine metabolism; IMP biosynthesis via de novo pathway; 5-amino-1-(5-phospho-D-ribosyl)imidazole-4-carboxamide from 5-amino-1-(5-phospho-D-ribosyl)imidazole-4-carboxylate: step 1/2. The chain is Phosphoribosylaminoimidazole-succinocarboxamide synthase from Methylibium petroleiphilum (strain ATCC BAA-1232 / LMG 22953 / PM1).